The chain runs to 297 residues: Probable E3 SUMO-protein ligase RNF212 (297 aa).

Residues 7–46 (CNRCFQPPHRTSCFSLTNCGHVYCDACLGKGKKNECLICK) form an RING-type zinc finger. Residues 91–124 (RKRLLAFYREKISRLEESLRKSVLQIEQLQSMRS) are a coiled coil.

Its subcellular location is the nucleus. The protein resides in the chromosome. It participates in protein modification; protein sumoylation. In terms of biological role, SUMO E3 ligase that acts as a regulator of crossing-over during meiosis: required to couple chromosome synapsis to the formation of crossover-specific recombination complexes. Localizes to recombination sites and stabilizes meiosis-specific recombination factors, such as MutS-gamma complex proteins (MSH4 and MSH5) and TEX11. May mediate sumoylation of target proteins MSH4 and/or MSH5, leading to enhance their binding to recombination sites. Acts as a limiting factor for crossover designation and/or reinforcement and plays an antagonist role with CCNB1IP1/HEI10 in the regulation of meiotic recombination. This is Probable E3 SUMO-protein ligase RNF212 (RNF212) from Homo sapiens (Human).